We begin with the raw amino-acid sequence, 491 residues long: Iota-carrageenase (491 aa).

An N-terminal signal peptide occupies residues 1–19 (MKLQFKPVYLASIAIMAIG). Residues Cys-422 and Cys-490 are joined by a disulfide bond.

It belongs to the glycosyl hydrolase 82 family.

It is found in the secreted. The enzyme catalyses Endohydrolysis of 1,4-beta-D-linkages between D-galactose 4-sulfate and 3,6-anhydro-D-galactose-2-sulfate in iota-carrageenans.. In terms of biological role, hydrolyzes iota-carrageenans, sulfated 1,3-alpha-1,4-beta galactans from red algal cell walls, with an inversion of anomeric configuration. Also active against hybrid iota-/nu-carrageenan, not active against kappa- or lambda-carrageenans. This chain is Iota-carrageenase, found in Zobellia galactanivorans (strain DSM 12802 / CCUG 47099 / CIP 106680 / NCIMB 13871 / Dsij).